The chain runs to 751 residues: Photosystem I P700 chlorophyll a apoprotein A1 (751 aa).

A run of 8 helical transmembrane segments spans residues 73–96, 159–182, 198–222, 294–312, 349–372, 388–414, 436–458, and 533–551; these read VFSAHFGQLGIIFIWLSGMYFHGA, LYATAIGGLVMAAAMFFAGWFHYH, MNHHLAGLLGLGSLAWAGHQIHISL, EAHHHLAIAVLFLIAGHQY, WHAQLAINLAMLGSLSIIVAHHMY, LSLFTHHVWIGGFCIVGAGAHAAIFMV, AIISHLNWVCIFLGFHSFGLYIH, and FLVHHIHAFTIHVTVLILL. Positions 575 and 584 each coordinate [4Fe-4S] cluster. The next 2 helical transmembrane spans lie at 591–612 and 665–687; these read HVFLGLFWMYNSLSIVIFHFSW and LSAYGLMFLGAHFVWAFSLMFLF. His676 provides a ligand contact to chlorophyll a'. Chlorophyll a-binding residues include Met684 and Tyr692. Trp693 contacts phylloquinone. Residues 725–745 form a helical membrane-spanning segment; that stretch reads AVGVAHYLLGGIATTWSFFLA.

The protein belongs to the PsaA/PsaB family. As to quaternary structure, the PsaA/B heterodimer binds the P700 chlorophyll special pair and subsequent electron acceptors. PSI consists of a core antenna complex that captures photons, and an electron transfer chain that converts photonic excitation into a charge separation. The eukaryotic PSI reaction center is composed of at least 11 subunits. It depends on P700 is a chlorophyll a/chlorophyll a' dimer, A0 is one or more chlorophyll a, A1 is one or both phylloquinones and FX is a shared 4Fe-4S iron-sulfur center. as a cofactor.

It localises to the plastid. The protein localises to the chloroplast thylakoid membrane. The catalysed reaction is reduced [plastocyanin] + hnu + oxidized [2Fe-2S]-[ferredoxin] = oxidized [plastocyanin] + reduced [2Fe-2S]-[ferredoxin]. PsaA and PsaB bind P700, the primary electron donor of photosystem I (PSI), as well as the electron acceptors A0, A1 and FX. PSI is a plastocyanin/cytochrome c6-ferredoxin oxidoreductase, converting photonic excitation into a charge separation, which transfers an electron from the donor P700 chlorophyll pair to the spectroscopically characterized acceptors A0, A1, FX, FA and FB in turn. Oxidized P700 is reduced on the lumenal side of the thylakoid membrane by plastocyanin or cytochrome c6. In Oltmannsiellopsis viridis (Marine flagellate), this protein is Photosystem I P700 chlorophyll a apoprotein A1.